The chain runs to 892 residues: Ice-binding protein 1 (892 aa).

The N-terminal stretch at methionine 1 to glycine 23 is a signal peptide. Cysteine 24 carries N-palmitoyl cysteine lipidation. A lipid anchor (S-diacylglycerol cysteine) is attached at cysteine 24. BIG2 domains lie at threonine 43–serine 111, threonine 134–serine 205, serine 221–aspartate 288, threonine 306–valine 386, threonine 392–threonine 471, asparagine 478–valine 558, and serine 565–leucine 638. The short motif at threonine 866 to asparagine 869 is the Ice-binding site motif (T-A/G-X-T/N) element.

The protein belongs to the ice-binding protein family.

It localises to the cell outer membrane. Functionally, ice-binding adhesion protein that adsorbs this bacterium onto ice to maintain a favorable position in its aquatic habitat. Inhibits growth of the ice crystals. Has high thermal hysteresis (TH) activity, which is the ability to lower the freezing point of an aqueous solution below its melting point. The TH activity of this protein is approximately 1.4 degrees Celsius at 25 uM and little below 2 degrees Celsius at 80 uM. This chain is Ice-binding protein 1, found in Shewanella frigidimarina (strain NCIMB 400).